Here is a 240-residue protein sequence, read N- to C-terminus: T4 protein (240 aa).

The protein belongs to the poxviruses B9 family.

The chain is T4 protein from Sheeppox virus (strain KS-1) (SPPV).